A 391-amino-acid polypeptide reads, in one-letter code: Geranylgeranyl diphosphate reductase (391 aa).

Belongs to the geranylgeranyl reductase family. ChlP subfamily.

It carries out the reaction phytyl diphosphate + 3 NADP(+) = geranylgeranyl diphosphate + 3 NADPH + 3 H(+). The protein operates within porphyrin-containing compound metabolism; bacteriochlorophyll biosynthesis (light-independent). Functionally, catalyzes the stepwise hydrogenation of geranylgeraniol to phytol during bacteriochlorophyll A (BchlA) biosynthesis. The chain is Geranylgeranyl diphosphate reductase (bchP) from Rhodobacter capsulatus (strain ATCC BAA-309 / NBRC 16581 / SB1003).